Reading from the N-terminus, the 366-residue chain is 3-dehydroquinate synthase (366 aa).

NAD(+) contacts are provided by residues 69–74 (DGEAFK), 103–107 (GVIGD), 127–128 (TT), lysine 140, and lysine 149. Zn(2+) contacts are provided by glutamate 182, histidine 245, and histidine 262.

This sequence belongs to the sugar phosphate cyclases superfamily. Dehydroquinate synthase family. Requires Co(2+) as cofactor. It depends on Zn(2+) as a cofactor. The cofactor is NAD(+).

It is found in the cytoplasm. The enzyme catalyses 7-phospho-2-dehydro-3-deoxy-D-arabino-heptonate = 3-dehydroquinate + phosphate. Its pathway is metabolic intermediate biosynthesis; chorismate biosynthesis; chorismate from D-erythrose 4-phosphate and phosphoenolpyruvate: step 2/7. Catalyzes the conversion of 3-deoxy-D-arabino-heptulosonate 7-phosphate (DAHP) to dehydroquinate (DHQ). The protein is 3-dehydroquinate synthase of Pseudomonas fluorescens (strain Pf0-1).